The chain runs to 282 residues: HTH-type transcriptional activator RhaR (282 aa).

The HTH araC/xylS-type domain maps to D179–L277. 2 DNA-binding regions (H-T-H motif) span residues D196–T217 and I244–T267.

As to quaternary structure, binds DNA as a dimer.

It localises to the cytoplasm. In terms of biological role, activates expression of the rhaSR operon in response to L-rhamnose. This Salmonella typhimurium (strain LT2 / SGSC1412 / ATCC 700720) protein is HTH-type transcriptional activator RhaR.